Here is a 371-residue protein sequence, read N- to C-terminus: MNKAPHETRVVVGMSGGVDSSVAALLLKEQGYDVIGIFMKNWDDTDENGVCTATEDYEDVVRVCNQIGIPYYAVNFEKQYWDKVFTYFLNEYKAGRTPNPDVMCNKEIKFKAFLEHAMSIGADYVATGHYARVEFRDGEYKMLRGADPNKDQTYFLNQLGQAQLSKVMFPIGHLQKADVRRIAKEAGLATAGKKDSTGICFIGERDFKEFLSHYLPAQPGVMKTLDGEVKGRHDGVMYYTIGQRHGLGIGGSGEPWFVVGKDVRENVLYVAQGFENEYLYSTSLKAVDVNWVSDRKPEAPFRCTAKFRYRQPDIGVMVHPLADGKAEVVFDAPARAVTPGQAVVFYNGDECLGGGTIDEVFRNGEKLWYVG.

ATP contacts are provided by residues 13–20 (GMSGGVDS) and Met39. Residues 99–101 (NPD) form an interaction with target base in tRNA region. The Nucleophile role is filled by Cys104. Cysteines 104 and 200 form a disulfide. Gly128 contacts ATP. The segment at 150–152 (KDQ) is interaction with tRNA. Cys200 functions as the Cysteine persulfide intermediate in the catalytic mechanism. An interaction with tRNA region spans residues 308–309 (RY).

It belongs to the MnmA/TRMU family.

The protein resides in the cytoplasm. It catalyses the reaction S-sulfanyl-L-cysteinyl-[protein] + uridine(34) in tRNA + AH2 + ATP = 2-thiouridine(34) in tRNA + L-cysteinyl-[protein] + A + AMP + diphosphate + H(+). Functionally, catalyzes the 2-thiolation of uridine at the wobble position (U34) of tRNA, leading to the formation of s(2)U34. The chain is tRNA-specific 2-thiouridylase MnmA from Geobacillus thermodenitrificans (strain NG80-2).